A 198-amino-acid polypeptide reads, in one-letter code: MKKWLVVFFLSASALANPQQELNQRLGMNDGFSANFNQTVTSPEGEVVMEGEGSVDIARPSLFRWSTSLPDENLLVSDGKTLWYYSPFIEQVSIYWQEQAVQQTPFVLLTRNQSSDWENYQITQDGNVFTLVPKAADSTQGQFQIDIDAKGIVHGFNVIEQDGQKGIFKFTDMKLGKPAAARFTFNIPEGVEVDDQRN.

An N-terminal signal peptide occupies residues 1–16 (MKKWLVVFFLSASALA).

The protein belongs to the LolA family. In terms of assembly, monomer.

Its subcellular location is the periplasm. In terms of biological role, participates in the translocation of lipoproteins from the inner membrane to the outer membrane. Only forms a complex with a lipoprotein if the residue after the N-terminal Cys is not an aspartate (The Asp acts as a targeting signal to indicate that the lipoprotein should stay in the inner membrane). This chain is Outer-membrane lipoprotein carrier protein, found in Vibrio vulnificus (strain YJ016).